A 396-amino-acid polypeptide reads, in one-letter code: tRNA (guanine-N(7)-)-methyltransferase non-catalytic subunit wuho (396 aa).

4 WD repeats span residues 75 to 115, 162 to 201, 205 to 243, and 302 to 342; these read KVEV…AQLL, GHLS…DIHS, GHKE…ELLL, and AGTW…RASG.

This sequence belongs to the WD repeat TRM82 family. Forms a heterodimer with the catalytic subunit Mettl1. Interacts with mei-P26 and weakly interacts with bgcn; required for the function or formation of the mei-P26-bgcn-bam-sxl complex. Interacts with nanos; may be involved in mei-P26-dependent derepression of the BMP signaling pathway. Interacts with Myc; the interaction may be mediated by mei-P26 and may be involved in the regulation of ribosome biogenesis. As to expression, in testis, it is present at high level in hub cells, a niche for germline stem cells of testis. Ubiquitously expressed in all testicular cells throughout spermatogenesis. Ubiquitously expressed in all germline and somatic cells of the ovary.

It is found in the nucleus. The protein resides in the cytoplasm. Its pathway is tRNA modification; N(7)-methylguanine-tRNA biosynthesis. Required for the Mettl1-dependent formation of N(7)-methylguanine at position 46 (m7G46) in tRNA. In the Mettl1-wuho methyltransferase complex, it is required to stabilize and induce conformational changes of the catalytic subunit. Required for binding of nanos mRNA and repression of translation by the mei-P26-bgcn-bam-sxl complex. May cooperate with mei-P26 and nanos to derepress the BMP signaling pathway. May cooperate with mei-P26 to suppress expression of a subset of microRNAs. May cooperate with mei-P26 to regulate bam expression levels in germline cells during gametogenesis. Required to promote mitosis to meiosis transition during gametogenesis. May regulate germline cell division in part by regulating ribosome biogenesis. In Drosophila pseudoobscura pseudoobscura (Fruit fly), this protein is tRNA (guanine-N(7)-)-methyltransferase non-catalytic subunit wuho.